The sequence spans 79 residues: CDC42 small effector protein 1 (79 aa).

2 S-palmitoyl cysteine lipidation sites follow: Cys10 and Cys11. In terms of domain architecture, CRIB spans 30–43; that stretch reads IGEPMNFVHLTHIG. The disordered stretch occupies residues 48-79; that stretch reads GAGDGLAMTGAVQEQMRSKGNRDRPWSNSRGL. The span at 63–72 shows a compositional bias: basic and acidic residues; it reads MRSKGNRDRP.

It belongs to the CDC42SE/SPEC family. In terms of assembly, interacts with CDC42 (in GTP-bound form). Interacts weakly with RAC1 and not at all with RHOA.

It is found in the cytoplasm. It localises to the cytoskeleton. The protein localises to the cell membrane. Its function is as follows. Probably involved in the organization of the actin cytoskeleton by acting downstream of CDC42, inducing actin filament assembly. Alters CDC42-induced cell shape changes. In activated T-cells, may play a role in CDC42-mediated F-actin accumulation at the immunological synapse. May play a role in early contractile events in phagocytosis in macrophages. The protein is CDC42 small effector protein 1 (CDC42SE1) of Bos taurus (Bovine).